We begin with the raw amino-acid sequence, 279 residues long: Acyl-[acyl-carrier-protein]--UDP-N-acetylglucosamine O-acyltransferase (279 aa).

This sequence belongs to the transferase hexapeptide repeat family. LpxA subfamily. As to quaternary structure, homotrimer.

It localises to the cytoplasm. The catalysed reaction is a (3R)-hydroxyacyl-[ACP] + UDP-N-acetyl-alpha-D-glucosamine = a UDP-3-O-[(3R)-3-hydroxyacyl]-N-acetyl-alpha-D-glucosamine + holo-[ACP]. It functions in the pathway glycolipid biosynthesis; lipid IV(A) biosynthesis; lipid IV(A) from (3R)-3-hydroxytetradecanoyl-[acyl-carrier-protein] and UDP-N-acetyl-alpha-D-glucosamine: step 1/6. Its function is as follows. Involved in the biosynthesis of lipid A, a phosphorylated glycolipid that anchors the lipopolysaccharide to the outer membrane of the cell. This chain is Acyl-[acyl-carrier-protein]--UDP-N-acetylglucosamine O-acyltransferase, found in Chlamydia pneumoniae (Chlamydophila pneumoniae).